Consider the following 394-residue polypeptide: 3-phenylpropionate/cinnamic acid dioxygenase ferredoxin--NAD(+) reductase component (394 aa).

An FAD-binding site is contributed by 5–36 (TFIIVGAGQAGAMAAATLRQQQFDGDIILIGK). 146–174 (RILIVGGGVIGLELAATSCELGANVTVIE) is an NAD(+) binding site.

The protein belongs to the bacterial ring-hydroxylating dioxygenase ferredoxin reductase family. As to quaternary structure, this dioxygenase system consists of four proteins: the two subunits of the hydroxylase component (HcaE and HcaF), a ferredoxin (HcaC) and a ferredoxin reductase (HcaD). The cofactor is FAD.

The enzyme catalyses 2 reduced [2Fe-2S]-[ferredoxin] + NAD(+) + H(+) = 2 oxidized [2Fe-2S]-[ferredoxin] + NADH. The protein operates within aromatic compound metabolism; 3-phenylpropanoate degradation. Functionally, part of the multicomponent 3-phenylpropionate dioxygenase, that converts 3-phenylpropionic acid (PP) and cinnamic acid (CI) into 3-phenylpropionate-dihydrodiol (PP-dihydrodiol) and cinnamic acid-dihydrodiol (CI-dihydrodiol), respectively. This Photorhabdus laumondii subsp. laumondii (strain DSM 15139 / CIP 105565 / TT01) (Photorhabdus luminescens subsp. laumondii) protein is 3-phenylpropionate/cinnamic acid dioxygenase ferredoxin--NAD(+) reductase component.